The chain runs to 155 residues: Ribosomal RNA large subunit methyltransferase H (155 aa).

S-adenosyl-L-methionine is bound by residues Gly104 and 123-128 (FGNITL).

It belongs to the RNA methyltransferase RlmH family. As to quaternary structure, homodimer.

The protein resides in the cytoplasm. It carries out the reaction pseudouridine(1915) in 23S rRNA + S-adenosyl-L-methionine = N(3)-methylpseudouridine(1915) in 23S rRNA + S-adenosyl-L-homocysteine + H(+). In terms of biological role, specifically methylates the pseudouridine at position 1915 (m3Psi1915) in 23S rRNA. This is Ribosomal RNA large subunit methyltransferase H from Mesoplasma florum (strain ATCC 33453 / NBRC 100688 / NCTC 11704 / L1) (Acholeplasma florum).